The following is a 137-amino-acid chain: Secreted RxLR effector protein 67 (137 aa).

Positions 1-18 are cleaved as a signal peptide; the sequence is MRLYILVLAAIAVTLVFA. Residues 32–61 carry the RxLR-dEER motif; sequence RALRQASITDEKSDDSLNAQAPPLSKSEKR. The tract at residues 40–65 is disordered; that stretch reads TDEKSDDSLNAQAPPLSKSEKRLSRS. Residues 114-134 traverse the membrane as a helical segment; that stretch reads WFVRMILEAGIFWAVFHCLSA.

It belongs to the RxLR effector family.

The protein resides in the secreted. Its subcellular location is the host cytoplasm. The protein localises to the host nucleus. It is found in the membrane. Its function is as follows. Effector that partially suppresses the tobacco programmed cell death induced by cell death-inducing proteins. This chain is Secreted RxLR effector protein 67, found in Plasmopara viticola (Downy mildew of grapevine).